Consider the following 800-residue polypeptide: Metabotropic glutamate receptor-like protein C (800 aa).

The signal sequence occupies residues 1–21 (MKMKIIFLILILIFSINIIKC). Residues 22 to 392 (DKEFKMLTLL…EVEFSQSLQY (371 aa)) lie on the Extracellular side of the membrane. 7 N-linked (GlcNAc...) asparagine glycosylation sites follow: asparagine 69, asparagine 107, asparagine 166, asparagine 258, asparagine 276, asparagine 302, and asparagine 345. Residues 393-413 (GFSITTGVLIAITIIMMLGIV) form a helical membrane-spanning segment. Residues 414-426 (RYKSTPSIRSASP) lie on the Cytoplasmic side of the membrane. The chain crosses the membrane as a helical span at residues 427–447 (IFLNFILAGGIIVYIGIIVWV). Topologically, residues 448 to 463 (GPANDHQCNARLWLVT) are extracellular. A helical membrane pass occupies residues 464 to 484 (LGFSTLIGSLVVKNFRIWLIF). Over 485–499 (DNPELKSISITNYQL) the chain is Cytoplasmic. Residues 500–520 (FPWVGACLVINIILMSILTSV) form a helical membrane-spanning segment. At 521 to 551 (GDLREIDAQGIDSLGKYEFMKVCKMNSSGAS) the chain is on the extracellular side. Asparagine 546 is a glycosylation site (N-linked (GlcNAc...) asparagine). Residues 552 to 572 (TLYTILAYFAALLLVGVFVSW) traverse the membrane as a helical segment. Residues 573–586 (KIRIVDIQEFNESK) are Cytoplasmic-facing. Residues 587 to 607 (AIANTLYAISFCLFVIVPLMI) traverse the membrane as a helical segment. Topologically, residues 608 to 616 (SPQDKQSET) are extracellular. The chain crosses the membrane as a helical span at residues 617–637 (IVLCTAGLFITTAALLIIFTP). The Cytoplasmic segment spans residues 638-800 (KFWRVFTLGD…NDTEEEDKNQ (163 aa)). Disordered regions lie at residues 658-694 (QSNV…TETS) and 718-800 (EFDD…DKNQ). Residues 718–732 (EFDDNNIEQDNDNDN) are compositionally biased toward acidic residues. Residues 733–774 (DNNNNNNNNNNNNNNNNNNNNNNNNNNNNNNNNNNNNNNNNN) show a composition bias toward low complexity. The span at 781–791 (NDEKVEEKQQN) shows a compositional bias: basic and acidic residues.

It in the N-terminal section; belongs to the BMP lipoprotein family. This sequence in the C-terminal section; belongs to the G-protein coupled receptor 3 family. GABA-B receptor subfamily.

It localises to the membrane. This is Metabotropic glutamate receptor-like protein C (grlC) from Dictyostelium discoideum (Social amoeba).